The primary structure comprises 552 residues: CTP synthase (552 aa).

The tract at residues 1–273 (MSESKKNPET…LTPIARRFNM (273 aa)) is amidoligase domain. Ser21 is a CTP binding site. Residue Ser21 coordinates UTP. ATP contacts are provided by residues 22–27 (SLGKGI) and Asp79. Asp79 and Glu147 together coordinate Mg(2+). CTP contacts are provided by residues 154–156 (DIE), 194–199 (KTKPTQ), and Lys230. UTP-binding positions include 194 to 199 (KTKPTQ) and Lys230. The Glutamine amidotransferase type-1 domain maps to 298 to 548 (TIAFVGKYLS…IQKSLELKKV (251 aa)). Gly359 is a binding site for L-glutamine. Cys386 acts as the Nucleophile; for glutamine hydrolysis in catalysis. L-glutamine contacts are provided by residues 387–390 (LGMQ), Glu410, and Arg478. Catalysis depends on residues His521 and Glu523.

It belongs to the CTP synthase family. In terms of assembly, homotetramer.

The catalysed reaction is UTP + L-glutamine + ATP + H2O = CTP + L-glutamate + ADP + phosphate + 2 H(+). The enzyme catalyses L-glutamine + H2O = L-glutamate + NH4(+). It carries out the reaction UTP + NH4(+) + ATP = CTP + ADP + phosphate + 2 H(+). It functions in the pathway pyrimidine metabolism; CTP biosynthesis via de novo pathway; CTP from UDP: step 2/2. With respect to regulation, allosterically activated by GTP, when glutamine is the substrate; GTP has no effect on the reaction when ammonia is the substrate. The allosteric effector GTP functions by stabilizing the protein conformation that binds the tetrahedral intermediate(s) formed during glutamine hydrolysis. Inhibited by the product CTP, via allosteric rather than competitive inhibition. Its function is as follows. Catalyzes the ATP-dependent amination of UTP to CTP with either L-glutamine or ammonia as the source of nitrogen. Regulates intracellular CTP levels through interactions with the four ribonucleotide triphosphates. This Wolinella succinogenes (strain ATCC 29543 / DSM 1740 / CCUG 13145 / JCM 31913 / LMG 7466 / NCTC 11488 / FDC 602W) (Vibrio succinogenes) protein is CTP synthase.